A 399-amino-acid polypeptide reads, in one-letter code: Elongation factor Tu (399 aa).

One can recognise a tr-type G domain in the interval 10 to 204 (KPHVNIGTIG…AVDASIPEPE (195 aa)). The interval 19-26 (GHVDHGKT) is G1. A GTP-binding site is contributed by 19–26 (GHVDHGKT). Thr26 contacts Mg(2+). Residues 60 to 64 (GITIN) form a G2 region. Positions 81 to 84 (DCPG) are G3. Residues 81-85 (DCPGH) and 136-139 (NKCD) contribute to the GTP site. Residues 136 to 139 (NKCD) form a G4 region. Residues 174–176 (SGL) form a G5 region.

The protein belongs to the TRAFAC class translation factor GTPase superfamily. Classic translation factor GTPase family. EF-Tu/EF-1A subfamily. In terms of assembly, monomer.

It localises to the cytoplasm. The enzyme catalyses GTP + H2O = GDP + phosphate + H(+). Its function is as follows. GTP hydrolase that promotes the GTP-dependent binding of aminoacyl-tRNA to the A-site of ribosomes during protein biosynthesis. In Prochlorococcus marinus (strain SARG / CCMP1375 / SS120), this protein is Elongation factor Tu.